The following is a 551-amino-acid chain: Adenylyl cyclase-associated protein (551 aa).

The interval 34–55 is disordered; it reads SGHKPLPNMHRPSRDSNSQTHN. Serine 92 is modified (phosphoserine). A Phosphothreonine modification is found at threonine 96. A compositionally biased stretch (polar residues) spans 288–300; the sequence is SASKTQAPSSGDS. Disordered regions lie at residues 288–333 and 348–395; these read SASK…NKGD and TSGL…PVKP. Positions 305-315 are enriched in pro residues; the sequence is LPPPPPPPPPS. The span at 352-361 shows a compositional bias: basic and acidic residues; sequence RKVDKSEMTH. The C-CAP/cofactor C-like domain maps to 395-529; that stretch reads PPRIELENTK…EEGDYAERAV (135 aa).

This sequence belongs to the CAP family.

In terms of biological role, the N-terminal domain binds to adenylyl cyclase, thereby enabling adenylyl cyclase to be activated by upstream regulatory signals, such as Ras. The C-terminal domain is required for normal cellular morphology and growth control. The protein is Adenylyl cyclase-associated protein (cap1) of Schizosaccharomyces pombe (strain 972 / ATCC 24843) (Fission yeast).